A 430-amino-acid polypeptide reads, in one-letter code: Serine--tRNA ligase (430 aa).

The segment at 47–66 (AQAEQNKASKEAGAAKGRGD) is disordered. Residue 231–233 (TSE) participates in L-serine binding. 262-264 (RSE) contacts ATP. Glutamate 285 contacts L-serine. 349 to 352 (EISS) serves as a coordination point for ATP. Serine 385 is a binding site for L-serine.

The protein belongs to the class-II aminoacyl-tRNA synthetase family. Type-1 seryl-tRNA synthetase subfamily. Homodimer. The tRNA molecule binds across the dimer.

The protein localises to the cytoplasm. The enzyme catalyses tRNA(Ser) + L-serine + ATP = L-seryl-tRNA(Ser) + AMP + diphosphate + H(+). It carries out the reaction tRNA(Sec) + L-serine + ATP = L-seryl-tRNA(Sec) + AMP + diphosphate + H(+). It functions in the pathway aminoacyl-tRNA biosynthesis; selenocysteinyl-tRNA(Sec) biosynthesis; L-seryl-tRNA(Sec) from L-serine and tRNA(Sec): step 1/1. In terms of biological role, catalyzes the attachment of serine to tRNA(Ser). Is also able to aminoacylate tRNA(Sec) with serine, to form the misacylated tRNA L-seryl-tRNA(Sec), which will be further converted into selenocysteinyl-tRNA(Sec). The chain is Serine--tRNA ligase from Paracoccus denitrificans (strain Pd 1222).